The chain runs to 104 residues: Fluoride-specific ion channel FluC 2 (104 aa).

Helical transmembrane passes span 22–42 (IGPY…LAAV), 48–68 (LVMA…STLA), and 82–102 (MLLG…WCGL). Residues glycine 59 and serine 62 each coordinate Na(+).

The protein belongs to the fluoride channel Fluc/FEX (TC 1.A.43) family.

It localises to the cell membrane. It catalyses the reaction fluoride(in) = fluoride(out). Its activity is regulated as follows. Na(+) is not transported, but it plays an essential structural role and its presence is essential for fluoride channel function. Its function is as follows. Fluoride-specific ion channel. Important for reducing fluoride concentration in the cell, thus reducing its toxicity. This is Fluoride-specific ion channel FluC 2 from Corynebacterium diphtheriae (strain ATCC 700971 / NCTC 13129 / Biotype gravis).